Reading from the N-terminus, the 476-residue chain is ATP synthase subunit beta, chloroplastic (476 aa).

153 to 160 (GGAGVGKT) serves as a coordination point for ATP.

Belongs to the ATPase alpha/beta chains family. In terms of assembly, F-type ATPases have 2 components, CF(1) - the catalytic core - and CF(0) - the membrane proton channel. CF(1) has five subunits: alpha(3), beta(3), gamma(1), delta(1), epsilon(1). CF(0) has four main subunits: a(1), b(1), b'(1) and c(9-12).

The protein localises to the plastid. Its subcellular location is the chloroplast thylakoid membrane. The enzyme catalyses ATP + H2O + 4 H(+)(in) = ADP + phosphate + 5 H(+)(out). Produces ATP from ADP in the presence of a proton gradient across the membrane. The catalytic sites are hosted primarily by the beta subunits. This chain is ATP synthase subunit beta, chloroplastic, found in Dicksonia antarctica (Australian tree fern).